Reading from the N-terminus, the 358-residue chain is Histidinol-phosphate aminotransferase (358 aa).

N6-(pyridoxal phosphate)lysine is present on Lys-211.

It belongs to the class-II pyridoxal-phosphate-dependent aminotransferase family. Histidinol-phosphate aminotransferase subfamily. As to quaternary structure, homodimer. It depends on pyridoxal 5'-phosphate as a cofactor.

It carries out the reaction L-histidinol phosphate + 2-oxoglutarate = 3-(imidazol-4-yl)-2-oxopropyl phosphate + L-glutamate. It functions in the pathway amino-acid biosynthesis; L-histidine biosynthesis; L-histidine from 5-phospho-alpha-D-ribose 1-diphosphate: step 7/9. In Blochmanniella pennsylvanica (strain BPEN), this protein is Histidinol-phosphate aminotransferase.